A 552-amino-acid chain; its full sequence is Ribosomal lysine N-methyltransferase 3 (552 aa).

Residues 26–335 (SKCDIRESPL…QGQEIFNSYG (310 aa)) enclose the SET domain. Tyr334 lines the S-adenosyl-L-methionine pocket. A disordered region spans residues 399–432 (EDEEDEDGQAKSDNLSDDIESEEEEEEEEGDDSL). Residues 413–432 (LSDDIESEEEEEEEEGDDSL) show a composition bias toward acidic residues.

This sequence belongs to the class V-like SAM-binding methyltransferase superfamily.

Its subcellular location is the nucleus. Its function is as follows. S-adenosyl-L-methionine-dependent protein-lysine N-methyltransferase that monomethylates 60S ribosomal protein L42 (RPL42A and RPL42B) at 'Lys-40'. The sequence is that of Ribosomal lysine N-methyltransferase 3 from Saccharomyces cerevisiae (strain ATCC 204508 / S288c) (Baker's yeast).